A 294-amino-acid polypeptide reads, in one-letter code: Nucleotide-binding protein CPF_0343 (294 aa).

8 to 15 is an ATP binding site; it reads GLSGAGKT. Residue 59-62 coordinates GTP; it reads DIRG.

The protein belongs to the RapZ-like family.

Its function is as follows. Displays ATPase and GTPase activities. This Clostridium perfringens (strain ATCC 13124 / DSM 756 / JCM 1290 / NCIMB 6125 / NCTC 8237 / Type A) protein is Nucleotide-binding protein CPF_0343.